The primary structure comprises 839 residues: Heat shock 70 kDa protein 4L (839 aa).

Phosphoserine is present on residues S74 and S508. The span at 503-554 shows a compositional bias: basic and acidic residues; sequence LEGDHSDAPMETETSFKNENKDNMDKMQVDQEEGHQKCHAEHTPEEEIDHTG. Positions 503–567 are disordered; it reads LEGDHSDAPM…KSAVSDKQDR (65 aa). T545 is subject to Phosphothreonine. S579 is subject to Phosphoserine. T761 carries the phosphothreonine modification. A disordered region spans residues 786 to 839; the sequence is IYKPKPKAEVPEDKPKANSEHNGPMDGQSGTETKSDSTKDSSQHTKSSGEMEVD. 2 stretches are compositionally biased toward basic and acidic residues: residues 791–804 and 818–839; these read PKAEVPEDKPKANS and TKSDSTKDSSQHTKSSGEMEVD.

Belongs to the heat shock protein 70 family. As to quaternary structure, homodimer.

Its subcellular location is the cytoplasm. It is found in the nucleus. Functionally, possesses chaperone activity in vitro where it inhibits aggregation of citrate synthase. This is Heat shock 70 kDa protein 4L (HSPA4L) from Homo sapiens (Human).